Consider the following 331-residue polypeptide: Large ribosomal subunit protein uL3 (331 aa).

The protein belongs to the universal ribosomal protein uL3 family. Part of the 50S ribosomal subunit. Forms a cluster with proteins L14 and L24e.

Its function is as follows. One of the primary rRNA binding proteins, it binds directly near the 3'-end of the 23S rRNA, where it nucleates assembly of the 50S subunit. This Thermoplasma acidophilum (strain ATCC 25905 / DSM 1728 / JCM 9062 / NBRC 15155 / AMRC-C165) protein is Large ribosomal subunit protein uL3.